A 147-amino-acid chain; its full sequence is Large ribosomal subunit protein uL13 (147 aa).

Positions alanine 126–glutamine 147 are disordered.

It belongs to the universal ribosomal protein uL13 family. As to quaternary structure, part of the 50S ribosomal subunit.

Functionally, this protein is one of the early assembly proteins of the 50S ribosomal subunit, although it is not seen to bind rRNA by itself. It is important during the early stages of 50S assembly. This chain is Large ribosomal subunit protein uL13, found in Parafrankia sp. (strain EAN1pec).